The primary structure comprises 312 residues: Pantothenate kinase (312 aa).

92–99 (GSVAVGKS) lines the ATP pocket.

The protein belongs to the prokaryotic pantothenate kinase family.

It localises to the cytoplasm. It carries out the reaction (R)-pantothenate + ATP = (R)-4'-phosphopantothenate + ADP + H(+). Its pathway is cofactor biosynthesis; coenzyme A biosynthesis; CoA from (R)-pantothenate: step 1/5. The sequence is that of Pantothenate kinase (coaA) from Vibrio cholerae serotype O1 (strain ATCC 39315 / El Tor Inaba N16961).